The chain runs to 519 residues: NADH dehydrogenase (519 aa).

The tract at residues 1-183 (MVLEPQIKSQ…YLNGESFTSG (183 aa)) is membrane-binding. The tract at residues 184 to 519 (RMTVEEILAQ…TTPAESAAAK (336 aa)) is catalytic. Position 210-241 (210-241 (DVLVVGGGPAGASSAIYAARKGIRTGIVADRF)) interacts with FAD. The cysteines at positions 337 and 340 are disulfide-linked. NAD(+) is bound at residue 349–379 (DVAVIGGGNSGVEAAIDLAGIVNHVTVLEFM). Residue 469-479 (TNVPGVFAAGD) coordinates FAD.

This sequence belongs to the class-II pyridine nucleotide-disulfide oxidoreductase family. As to quaternary structure, homodimer. FAD serves as cofactor.

The protein resides in the cell membrane. The catalysed reaction is a ubiquinone + NADH + 5 H(+)(in) = a ubiquinol + NAD(+) + 4 H(+)(out). In terms of biological role, transfer of electrons from NADH to the respiratory chain. The immediate electron acceptor for the enzyme is believed to be ubiquinone. The protein is NADH dehydrogenase (ahpF) of Ferdinandcohnia aciditolerans (strain JCM 32973 / CCTCC AB 2017280 / YN-1) (Bacillus aciditolerans).